The sequence spans 170 residues: 6,7-dimethyl-8-ribityllumazine synthase (170 aa).

Residues W25, 57 to 59, and 79 to 81 contribute to the 5-amino-6-(D-ribitylamino)uracil site; these read AVE and AVI. 84 to 85 is a (2S)-2-hydroxy-3-oxobutyl phosphate binding site; sequence DT. H87 acts as the Proton donor in catalysis. 5-amino-6-(D-ribitylamino)uracil is bound at residue N112. Position 126 (R126) interacts with (2S)-2-hydroxy-3-oxobutyl phosphate.

It belongs to the DMRL synthase family.

It carries out the reaction (2S)-2-hydroxy-3-oxobutyl phosphate + 5-amino-6-(D-ribitylamino)uracil = 6,7-dimethyl-8-(1-D-ribityl)lumazine + phosphate + 2 H2O + H(+). Its pathway is cofactor biosynthesis; riboflavin biosynthesis; riboflavin from 2-hydroxy-3-oxobutyl phosphate and 5-amino-6-(D-ribitylamino)uracil: step 1/2. Its function is as follows. Catalyzes the formation of 6,7-dimethyl-8-ribityllumazine by condensation of 5-amino-6-(D-ribitylamino)uracil with 3,4-dihydroxy-2-butanone 4-phosphate. This is the penultimate step in the biosynthesis of riboflavin. The protein is 6,7-dimethyl-8-ribityllumazine synthase of Thermobifida fusca (strain YX).